We begin with the raw amino-acid sequence, 502 residues long: Glycerol kinase (502 aa).

Threonine 14 is a binding site for ADP. Residues threonine 14, threonine 15, and serine 16 each contribute to the ATP site. Residue threonine 14 participates in sn-glycerol 3-phosphate binding. ADP is bound at residue arginine 18. 3 residues coordinate sn-glycerol 3-phosphate: arginine 84, glutamate 85, and tyrosine 136. Residues arginine 84, glutamate 85, and tyrosine 136 each coordinate glycerol. Position 232 is a phosphohistidine; by HPr (histidine 232). Sn-glycerol 3-phosphate is bound at residue aspartate 246. Glycerol-binding residues include aspartate 246 and glutamine 247. Threonine 268 and glycine 311 together coordinate ADP. ATP-binding residues include threonine 268, glycine 311, glutamine 315, and glycine 412. Glycine 412 and asparagine 416 together coordinate ADP.

The protein belongs to the FGGY kinase family. In terms of assembly, homotetramer and homodimer (in equilibrium). In terms of processing, the phosphoenolpyruvate-dependent sugar phosphotransferase system (PTS), including enzyme I, and histidine-containing protein (HPr) are required for the phosphorylation, which leads to the activation of the enzyme.

The enzyme catalyses glycerol + ATP = sn-glycerol 3-phosphate + ADP + H(+). It participates in polyol metabolism; glycerol degradation via glycerol kinase pathway; sn-glycerol 3-phosphate from glycerol: step 1/1. With respect to regulation, activated by phosphorylation and inhibited by fructose 1,6-bisphosphate (FBP). Key enzyme in the regulation of glycerol uptake and metabolism. Catalyzes the phosphorylation of glycerol to yield sn-glycerol 3-phosphate. The sequence is that of Glycerol kinase from Streptococcus pneumoniae (strain ATCC 700669 / Spain 23F-1).